Reading from the N-terminus, the 331-residue chain is Ferredoxin--NADP reductase 2 (331 aa).

FAD-binding residues include glutamate 37, glutamine 45, tyrosine 50, valine 90, phenylalanine 124, aspartate 286, and threonine 327.

It belongs to the ferredoxin--NADP reductase type 2 family. Homodimer. Requires FAD as cofactor.

The enzyme catalyses 2 reduced [2Fe-2S]-[ferredoxin] + NADP(+) + H(+) = 2 oxidized [2Fe-2S]-[ferredoxin] + NADPH. The chain is Ferredoxin--NADP reductase 2 from Listeria welshimeri serovar 6b (strain ATCC 35897 / DSM 20650 / CCUG 15529 / CIP 8149 / NCTC 11857 / SLCC 5334 / V8).